The sequence spans 2303 residues: Genome polyprotein (2303 aa).

A zinc finger spans residues 3-14 (CKHGYPDVCPIC). Positions 30–46 (DGEWFPTDLLCVDLDDD) are acidic. The segment at 60–73 (MEWTDVPLVCDTVM) is theilo. Residues 73 to 93 (MEPQGNASSSDKSNSQSSGNE) form a disordered region. Residue Gly-77 is the site of N-myristoyl glycine; by host attachment. The segment covering 80–90 (SSSDKSNSQSS) has biased composition (low complexity). Cys-501 and Cys-503 are disulfide-bonded. A host EIF4E binding region spans residues 1041–1047 (YYKQRLI). In terms of domain architecture, SF3 helicase spans 1283 to 1448 (IPLASLCEKF…CKTPAGMLDI (166 aa)). 1312 to 1319 (GAAGQGKS) lines the ATP pocket. At Tyr-1608 the chain carries O-(5'-phospho-RNA)-tyrosine. In terms of domain architecture, Peptidase C3 spans 1636-1829 (NPVMDFELFC…AATIITRELI (194 aa)). Active-site for protease 3C activity residues include His-1680, Asp-1714, and Cys-1793. The region spanning 2071 to 2189 (NYVYDVDYSN…GTNYQIDFNL (119 aa)) is the RdRp catalytic domain. Catalysis depends on for RdRp activity residues Asp-2077 and Asp-2175.

Belongs to the picornaviruses polyprotein family. Interacts with host EIF4E. Interacts with the leader protein. In terms of assembly, interacts with host RAN; the complex L-RAN recruits cellular kinases responsible for the L-induced nucleocytoplasmic trafficking inhibition. The complex L-RAN can further bind to the host exportins XPO1/CRM1 and CSE1L/CAS. Interacts with the protein 2A. Interacts with host RNASEL; this interaction prevents RNASEL activation by its substrate 2'-5' oligoadenylates. Post-translationally, phosphorylated. In terms of processing, specific enzymatic cleavages by the viral protease in vivo yield a variety of precursors and mature proteins. The polyprotein seems to be cotranslationally cleaved at the 2A/2B junction by a ribosomal skip from one codon to the next without formation of a peptide bond. This process would release the P1-2A peptide from the translational complex. During virion maturation, immature virions are rendered infectious following cleavage of VP0 into VP4 and VP2. This maturation seems to be an autocatalytic event triggered by the presence of RNA in the capsid and is followed by a conformational change of the particle. Post-translationally, uridylylated by the polymerase and is covalently linked to the 5'-end of genomic RNA. This uridylylated form acts as a nucleotide-peptide primer for the polymerase. In terms of processing, myristoylation is required during RNA encapsidation and formation of the mature virus particle.

It is found in the virion. The protein localises to the host cytoplasm. The protein resides in the host nucleus. It localises to the host nucleolus. Its subcellular location is the host cytoplasmic vesicle membrane. It catalyses the reaction RNA(n) + a ribonucleoside 5'-triphosphate = RNA(n+1) + diphosphate. It carries out the reaction ATP + H2O = ADP + phosphate + H(+). The enzyme catalyses Selective cleavage of Gln-|-Gly bond in the poliovirus polyprotein. In other picornavirus reactions Glu may be substituted for Gln, and Ser or Thr for Gly.. Functionally, forms a complex with host RAN and probably binds to exportins carrying activated MAPK in order to mediate the hyperphosphorylation of host Phe/Gly containing nuclear pore proteins (Nups) resulting in cessation of active nucleocytoplasmic transport. Proteins with NLS signals fail to import, cellular mRNAs fail to export, and some proteins small enough for diffusion are not retained anymore (efflux). The resulting inhibition of cellular protein synthesis serves to ensure maximal viral gene expression and to evade host immune response. The leader protein also inhibits host interferon regulatory factor 3 (IRF3) dimerization, thereby blocking the transcriptional activation of IFN genes. Binds to host RNase L thereby preventing its activation by 2'-5' oligoadenylates in order to counteract the antiviral interferon-inducible OAS/RNase L pathway. Inhibits the integrated stress response (ISR) in the infected cell. Inhibits the host EIF2AK2/PKR by rendering this kinase unable to detect double-stranded RNA. Also impairs host stress granule formation probably by acting on a step downstream of EIF2AK2/PKR activation. Forms an icosahedral capsid of pseudo T=3 symmetry with capsid proteins VP2 and VP3. Together they form an icosahedral capsid composed of 60 copies of each VP1, VP2, and VP3, with a diameter of approximately 300 Angstroms. VP4 lies on the inner surface of the protein shell formed by VP1, VP2 and VP3. All the three latter proteins contain a beta-sheet structure called beta-barrel jelly roll. VP1 is situated at the 12 fivefold axes, whereas VP2 and VP3 are located at the quasi-sixfold axes. Its function is as follows. Lies on the inner surface of the capsid shell. After binding to the host receptor, the capsid undergoes conformational changes. Capsid protein VP4 is released, capsid protein VP1 N-terminus is externalized, and together, they shape a pore in the host membrane through which the viral genome is translocated into the host cell cytoplasm. After genome has been released, the channel shrinks. In terms of biological role, VP0 precursor is a component of immature procapsids. Functionally, involved in host translation shutoff by inhibiting cap-dependent mRNA translation. Nuclear localization is required for this function. The resulting inhibition of cellular protein synthesis serves to ensure maximal viral gene expression and to evade host immune response. Inhibits the phosphorylation of the leader protein. Binds to the RNA stem-loop essential for the ribosomal frameshift event and trans-activates the production of protein 2B*. Affects membrane integrity and causes an increase in membrane permeability. Its function is as follows. Associates with and induces structural rearrangements of intracellular membranes. It displays RNA-binding, nucleotide binding and NTPase activities. In terms of biological role, serves as membrane anchor via its hydrophobic domain. Functionally, forms a primer, VPg-pU, which is utilized by the polymerase for the initiation of RNA chains. Cysteine protease that generates mature viral proteins from the precursor polyprotein. In addition to its proteolytic activity, it binds to viral RNA, and thus influences viral genome replication. RNA and substrate cooperatively bind to the protease. Cleaves host PABP1, this cleavage is important for viral replication. Its function is as follows. Replicates the genomic and antigenomic RNAs by recognizing replications specific signals. Performs VPg uridylylation. This chain is Genome polyprotein, found in Mus musculus (Mouse).